A 490-amino-acid polypeptide reads, in one-letter code: tRNA-2-methylthio-N(6)-dimethylallyladenosine synthase (490 aa).

In terms of domain architecture, MTTase N-terminal spans 37–154 (KKVYIATQGC…LPELYDKSTT (118 aa)). [4Fe-4S] cluster-binding residues include Cys-46, Cys-83, Cys-117, Cys-198, Cys-202, and Cys-205. The region spanning 184-416 (KVEGYRAFVS…QKVIRDSTLK (233 aa)) is the Radical SAM core domain. The TRAM domain occupies 419–487 (EEMVGKTLRV…PHMVRGELVD (69 aa)).

The protein belongs to the methylthiotransferase family. MiaB subfamily. In terms of assembly, monomer. [4Fe-4S] cluster is required as a cofactor.

The protein resides in the cytoplasm. The catalysed reaction is N(6)-dimethylallyladenosine(37) in tRNA + (sulfur carrier)-SH + AH2 + 2 S-adenosyl-L-methionine = 2-methylsulfanyl-N(6)-dimethylallyladenosine(37) in tRNA + (sulfur carrier)-H + 5'-deoxyadenosine + L-methionine + A + S-adenosyl-L-homocysteine + 2 H(+). Functionally, catalyzes the methylthiolation of N6-(dimethylallyl)adenosine (i(6)A), leading to the formation of 2-methylthio-N6-(dimethylallyl)adenosine (ms(2)i(6)A) at position 37 in tRNAs that read codons beginning with uridine. The chain is tRNA-2-methylthio-N(6)-dimethylallyladenosine synthase from Psychrobacter sp. (strain PRwf-1).